A 378-amino-acid polypeptide reads, in one-letter code: Spermidine/putrescine import ATP-binding protein PotA (378 aa).

The 231-residue stretch at 18 to 248 (VQLAGIRKCF…PKNLFVAGFI (231 aa)) folds into the ABC transporter domain. 50 to 57 (GPSGCGKT) is an ATP binding site.

This sequence belongs to the ABC transporter superfamily. Spermidine/putrescine importer (TC 3.A.1.11.1) family. As to quaternary structure, the complex is composed of two ATP-binding proteins (PotA), two transmembrane proteins (PotB and PotC) and a solute-binding protein (PotD).

The protein localises to the cell inner membrane. The enzyme catalyses ATP + H2O + polyamine-[polyamine-binding protein]Side 1 = ADP + phosphate + polyamineSide 2 + [polyamine-binding protein]Side 1.. Part of the ABC transporter complex PotABCD involved in spermidine/putrescine import. Responsible for energy coupling to the transport system. The sequence is that of Spermidine/putrescine import ATP-binding protein PotA from Escherichia coli O1:K1 / APEC.